The following is a 362-amino-acid chain: 3-dehydroquinate synthase (362 aa).

Residues 70–75 (DGEKYK), 104–108 (GVIGD), 128–129 (TT), Lys-141, and Lys-150 contribute to the NAD(+) site. Zn(2+)-binding residues include Glu-183, His-246, and His-263.

This sequence belongs to the sugar phosphate cyclases superfamily. Dehydroquinate synthase family. Requires Co(2+) as cofactor. Zn(2+) serves as cofactor. NAD(+) is required as a cofactor.

It localises to the cytoplasm. It carries out the reaction 7-phospho-2-dehydro-3-deoxy-D-arabino-heptonate = 3-dehydroquinate + phosphate. It participates in metabolic intermediate biosynthesis; chorismate biosynthesis; chorismate from D-erythrose 4-phosphate and phosphoenolpyruvate: step 2/7. In terms of biological role, catalyzes the conversion of 3-deoxy-D-arabino-heptulosonate 7-phosphate (DAHP) to dehydroquinate (DHQ). This Acinetobacter baylyi (strain ATCC 33305 / BD413 / ADP1) protein is 3-dehydroquinate synthase.